We begin with the raw amino-acid sequence, 193 residues long: Interferon type A1/A2 (193 aa).

Residues 1–31 form the signal peptide; that stretch reads MAVPASPQHPRGYGILLLTLLLKALATTASA. 3 disulfides stabilise this stretch: Cys-32/Cys-129, Cys-61/Cys-155, and Cys-68/Cys-168. Asn-65, Asn-71, Asn-108, and Asn-186 each carry an N-linked (GlcNAc...) asparagine glycan.

Belongs to the alpha/beta interferon family.

Its subcellular location is the secreted. Functionally, has antiviral activities. In Gallus gallus (Chicken), this protein is Interferon type A1/A2 (IFNA1).